Consider the following 192-residue polypeptide: Imidazoleglycerol-phosphate dehydratase (192 aa).

This sequence belongs to the imidazoleglycerol-phosphate dehydratase family.

It localises to the cytoplasm. The enzyme catalyses D-erythro-1-(imidazol-4-yl)glycerol 3-phosphate = 3-(imidazol-4-yl)-2-oxopropyl phosphate + H2O. It participates in amino-acid biosynthesis; L-histidine biosynthesis; L-histidine from 5-phospho-alpha-D-ribose 1-diphosphate: step 6/9. The polypeptide is Imidazoleglycerol-phosphate dehydratase (Hydrogenobaculum sp. (strain Y04AAS1)).